The following is a 295-amino-acid chain: Phosphatidylserine decarboxylase proenzyme (295 aa).

Catalysis depends on charge relay system; for autoendoproteolytic cleavage activity residues Asp90 and Ser258. The Schiff-base intermediate with substrate; via pyruvic acid; for decarboxylase activity role is filled by Ser258. Residue Ser258 is modified to Pyruvic acid (Ser); by autocatalysis.

The protein belongs to the phosphatidylserine decarboxylase family. PSD-B subfamily. Prokaryotic type I sub-subfamily. Heterodimer of a large membrane-associated beta subunit and a small pyruvoyl-containing alpha subunit. Requires pyruvate as cofactor. In terms of processing, is synthesized initially as an inactive proenzyme. Formation of the active enzyme involves a self-maturation process in which the active site pyruvoyl group is generated from an internal serine residue via an autocatalytic post-translational modification. Two non-identical subunits are generated from the proenzyme in this reaction, and the pyruvate is formed at the N-terminus of the alpha chain, which is derived from the carboxyl end of the proenzyme. The autoendoproteolytic cleavage occurs by a canonical serine protease mechanism, in which the side chain hydroxyl group of the serine supplies its oxygen atom to form the C-terminus of the beta chain, while the remainder of the serine residue undergoes an oxidative deamination to produce ammonia and the pyruvoyl prosthetic group on the alpha chain. During this reaction, the Ser that is part of the protease active site of the proenzyme becomes the pyruvoyl prosthetic group, which constitutes an essential element of the active site of the mature decarboxylase.

The protein resides in the cell membrane. It catalyses the reaction a 1,2-diacyl-sn-glycero-3-phospho-L-serine + H(+) = a 1,2-diacyl-sn-glycero-3-phosphoethanolamine + CO2. Its pathway is phospholipid metabolism; phosphatidylethanolamine biosynthesis; phosphatidylethanolamine from CDP-diacylglycerol: step 2/2. In terms of biological role, catalyzes the formation of phosphatidylethanolamine (PtdEtn) from phosphatidylserine (PtdSer). The chain is Phosphatidylserine decarboxylase proenzyme from Blochmanniella pennsylvanica (strain BPEN).